An 86-amino-acid chain; its full sequence is Large ribosomal subunit protein eL43 (86 aa).

The C4-type zinc finger occupies 38-59 (CPVCGRKAVRRISTGIWQCQKC).

The protein belongs to the eukaryotic ribosomal protein eL43 family. It depends on Zn(2+) as a cofactor.

The polypeptide is Large ribosomal subunit protein eL43 (Thermococcus gammatolerans (strain DSM 15229 / JCM 11827 / EJ3)).